A 138-amino-acid polypeptide reads, in one-letter code: Ribosome-binding factor A (138 aa).

Low complexity predominate over residues 1–20; sequence MSSRPPSSSGPAGIPKGAPS. The segment at 1 to 21 is disordered; the sequence is MSSRPPSSSGPAGIPKGAPSQ.

It belongs to the RbfA family. Monomer. Binds 30S ribosomal subunits, but not 50S ribosomal subunits or 70S ribosomes.

The protein resides in the cytoplasm. Its function is as follows. One of several proteins that assist in the late maturation steps of the functional core of the 30S ribosomal subunit. Associates with free 30S ribosomal subunits (but not with 30S subunits that are part of 70S ribosomes or polysomes). Required for efficient processing of 16S rRNA. May interact with the 5'-terminal helix region of 16S rRNA. The sequence is that of Ribosome-binding factor A from Granulibacter bethesdensis (strain ATCC BAA-1260 / CGDNIH1).